Consider the following 514-residue polypeptide: 1,25-dihydroxyvitamin D(3) 24-hydroxylase, mitochondrial (514 aa).

The N-terminal 35 residues, Met-1–Lys-35, are a transit peptide targeting the mitochondrion. Residue Cys-462 coordinates heme.

It belongs to the cytochrome P450 family. Requires heme as cofactor.

The protein localises to the mitochondrion. The catalysed reaction is calcitriol + 2 reduced [adrenodoxin] + O2 + 2 H(+) = calcitetrol + 2 oxidized [adrenodoxin] + H2O. It catalyses the reaction calcitetrol + 2 reduced [adrenodoxin] + O2 + 2 H(+) = (1S)-1,25-dihydroxy-24-oxocalciol + 2 oxidized [adrenodoxin] + 2 H2O. It carries out the reaction (1S)-1,25-dihydroxy-24-oxocalciol + 2 reduced [adrenodoxin] + O2 + 2 H(+) = (1S)-1,23,25-trihydroxy-24-oxocalciol + 2 oxidized [adrenodoxin] + H2O. The enzyme catalyses (1S)-1,23-dihydroxy-24,25,26,27-tetranorcalciol + 2 reduced [adrenodoxin] + O2 + 2 H(+) = (1S)-1-hydroxy-23-oxo-24,25,26,27-tetranorcalciol + 2 oxidized [adrenodoxin] + 2 H2O. The catalysed reaction is (1S)-1-hydroxy-23-oxo-24,25,26,27-tetranorcalciol + 2 reduced [adrenodoxin] + O2 + H(+) = calcitroate + 2 oxidized [adrenodoxin] + H2O. It catalyses the reaction calcidiol + 2 reduced [adrenodoxin] + O2 + 2 H(+) = secalciferol + 2 oxidized [adrenodoxin] + H2O. It carries out the reaction secalciferol + 2 reduced [adrenodoxin] + O2 + 2 H(+) = 25-hydroxy-24-oxocalciol + 2 oxidized [adrenodoxin] + 2 H2O. The enzyme catalyses 25-hydroxy-24-oxocalciol + 2 reduced [adrenodoxin] + O2 + 2 H(+) = 23S,25-dihydroxy-24-oxocholecalciferol + 2 oxidized [adrenodoxin] + H2O. The catalysed reaction is 20S,23-dihydroxycholecalciferol + 2 reduced [adrenodoxin] + O2 + 2 H(+) = 20S,23,25-trihydroxycholecalciferol + 2 oxidized [adrenodoxin] + H2O. It catalyses the reaction 20S,23-dihydroxycholecalciferol + 2 reduced [adrenodoxin] + O2 + 2 H(+) = 20S,23,24-trihydroxycholecalciferol + 2 oxidized [adrenodoxin] + H2O. It carries out the reaction 20S-hydroxycholecalciferol + 2 reduced [adrenodoxin] + O2 + 2 H(+) = 20S,25-dihydroxycholecalciferol + 2 oxidized [adrenodoxin] + H2O. The enzyme catalyses 20S-hydroxycholecalciferol + 2 reduced [adrenodoxin] + O2 + 2 H(+) = 20S,24S-dihydroxycholecalciferol + 2 oxidized [adrenodoxin] + H2O. The catalysed reaction is 20S-hydroxycholecalciferol + 2 reduced [adrenodoxin] + O2 + 2 H(+) = 20S,24R-dihydroxycholecalciferol + 2 oxidized [adrenodoxin] + H2O. Functionally, a cytochrome P450 monooxygenase with a key role in vitamin D catabolism and calcium homeostasis. Via C24-oxidation pathway, catalyzes the inactivation of both the vitamin D precursor calcidiol (25-hydroxyvitamin D(3)) and the active hormone calcitriol (1-alpha,25-dihydroxyvitamin D(3)). With initial hydroxylation at C-24 (via C24-oxidation pathway), performs a sequential 6-step oxidation of calcitriol leading to the formation of the biliary metabolite calcitroic acid. Hydroxylates at C-24 or C-25 other vitamin D active metabolites, such as CYP11A1-derived secosteroids 20S-hydroxycholecalciferol and 20S,23-dihydroxycholecalciferol. Mechanistically, uses molecular oxygen inserting one oxygen atom into a substrate, and reducing the second into a water molecule, with two electrons provided by NADPH via FDXR/adrenodoxin reductase and FDX1/adrenodoxin. The sequence is that of 1,25-dihydroxyvitamin D(3) 24-hydroxylase, mitochondrial from Mus musculus (Mouse).